Consider the following 814-residue polypeptide: MAAPEAWRARSCWFCEVAAATTMEATSREAAPAKSSASGPSAPPALFELCGRAVSAHMGVLESGVWALPGPILQSILPLLNIYYLERIEETALKKGLSTQAIWRRLWDELMKTRPSSLESVTCWRAKFMEAFFSHVLRGTIDVSSDRRLCDQRFSPLLHSSRHVRQLTICNMLQGATELVAEPNRRVLETLASSLHTLKFRHLLFSDVAAQQSLRQLLHQLIHHGAVSQVSLYSWPVPESALFILILTMSAGFWQPGPGGPPCRLCGEASRGRAPSRDEGSLLLGSRRPRRDAAERCAAALMASRRKSEAKQTARAAPATRVTRRSTQESLTAGGTDSKREPLPPATSHEAPGTKRPPSAPATTSSASASSSTSSSKRAPASSAPQPKPLKRFKRAAGKKGARTRQGCGAESEDLYDFVFIVAGEKEDGEEMEIGEVACGALDGSDPSCLGLPALEASQRFRSISTLELFTVPLSTEAALTLCHLLSSWVSLESLTLSYNGLGSNIFRLLDSLRALSVQAGCRLRALHLSDLFSPLPILELTRAIVRALPLLRVLSIRVDHPSQRDNPAVPGNAGPPSNVIGDEEIPENCLEQLEMGFPRGAQPAPLLCSVLKASGSLQQLSLDSATFASPQDFGLVLQTLKEYNLTLKRLSFHDMNLADCQSEVLFLLQNLTLQEITFSFCRLFEKRPAQFLPEMVAAMKGNSTLKGLRLPGNRLGNAGLLALADVFSEDSSSSLCQLDISSNCIKPDGLLEFAKRLERWGRGAFGHLRLFQNWLDQDAVTAREAIRRLRATCHVVSDSWDSSQAFADYVSTM.

The segment at 45–54 is interaction with Elongin BC complex; the sequence is ALFELCGRAV. Phosphoserine is present on residues S155, S276, and S326. The tract at residues 265-408 is disordered; sequence LCGEASRGRA…KKGARTRQGC (144 aa). T327 is modified (phosphothreonine). Low complexity predominate over residues 354 to 385; the sequence is TKRPPSAPATTSSASASSSTSSSKRAPASSAP. S375 is subject to Phosphoserine. Residues 389–403 show a composition bias toward basic residues; the sequence is PLKRFKRAAGKKGAR. LRR repeat units lie at residues 489-509, 520-532, 533-557, 615-637, 638-661, 703-730, and 733-754; these read WVSL…IFRL, AGCR…LSDL, FSPL…VLSI, SGSL…FGLV, LQTL…LADC, NSTL…VFSE, and SSSL…LLEF.

As to quaternary structure, part of a E3 ubiquitin ligase complex with elongin BC complex (ELOB and ELOC), RBX1 and CUL5.

This chain is Leucine-rich repeat-containing protein 41 (LRRC41), found in Bos taurus (Bovine).